A 754-amino-acid chain; its full sequence is Disintegrin and metalloproteinase domain-containing protein 7 (754 aa).

An N-terminal signal peptide occupies residues 1-18; that stretch reads MLPGCIFLMILLIPQVKE. The propeptide occupies 19 to 176; it reads KFILGVEGQQ…NYSCTELNFT (158 aa). Residues 19–668 lie on the Extracellular side of the membrane; the sequence is KFILGVEGQQ…ACEETLHVTN (650 aa). N84, N167, N174, and N184 each carry an N-linked (GlcNAc...) asparagine glycan. The region spanning 199–394 is the Peptidase M12B domain; the sequence is KYVELFIVAD…YKPTCMLNIP (196 aa). 4 disulfide bridges follow: C310–C389, C350–C373, C352–C357, and C460–C480. One can recognise a Disintegrin domain in the interval 402–488; sequence FQFCGNKKLD…ACPKDQFRVN (87 aa). N-linked (GlcNAc...) asparagine glycosylation is found at N584 and N668. The helical transmembrane segment at 669–689 threads the bilayer; the sequence is ITILVVVLVLVIVGIGVLILL. The Cytoplasmic portion of the chain corresponds to 690–754; it reads VRYRKCIKLK…GIADPNQSAK (65 aa).

As to quaternary structure, interacts with ITM2B in sperm; the interaction increases following capacitation. Interacts with HSPA5 and CANX.

The protein localises to the membrane. Its function is as follows. Required for normal male fertility via maintenance of epithelial cell morphology in the caput epididymis and subsequently correct epididymis lumen structure required for sperm development. Plays a role in sperm motility, flagella morphology and tyrosine phosphorylation during sperm capacitance. Plays a role in normal expression levels of HSPA5, ITM2B and ADAM2 in sperm both prior to and post-capacitation. This is a non catalytic metalloprotease-like protein. The sequence is that of Disintegrin and metalloproteinase domain-containing protein 7 from Homo sapiens (Human).